A 451-amino-acid chain; its full sequence is Trigger factor (451 aa).

Residues 173 to 258 enclose the PPIase FKBP-type domain; it reads GDRVTLDFVG…LKKIEWAHLP (86 aa).

The protein belongs to the FKBP-type PPIase family. Tig subfamily.

It is found in the cytoplasm. The enzyme catalyses [protein]-peptidylproline (omega=180) = [protein]-peptidylproline (omega=0). In terms of biological role, involved in protein export. Acts as a chaperone by maintaining the newly synthesized protein in an open conformation. Functions as a peptidyl-prolyl cis-trans isomerase. The sequence is that of Trigger factor from Cupriavidus necator (strain ATCC 17699 / DSM 428 / KCTC 22496 / NCIMB 10442 / H16 / Stanier 337) (Ralstonia eutropha).